We begin with the raw amino-acid sequence, 222 residues long: Collectrin (222 aa).

An N-terminal signal peptide occupies residues 1-14; sequence MLWLLFFLVTAIHA. Over 15 to 141 the chain is Extracellular; it reads DLCRPDAENA…LAPPTDPSVP (127 aa). One can recognise a Collectrin-like domain in the interval 21-222; the sequence is AENAFKVRLS…VTEDERLTPL (202 aa). N-linked (GlcNAc...) asparagine glycosylation is found at N76 and N93. Residues 142-162 form a helical membrane-spanning segment; it reads IWIIIFGVIFCIVLVATMLLI. Residues 163–222 lie on the Cytoplasmic side of the membrane; the sequence is ISGIRQHRRKNKGPSEMEDSEDKCENVITIENGIPCDPLDMKGGHINDAFVTEDERLTPL. 2 positions are modified to phosphothreonine: T214 and T220.

It belongs to the CLTRN family. Monomer. Homodimer; dimerization prevents CLTRN cleavage by BACE2. Interacts with SLC6A18; this interaction regulates the trafficking of SLC6A18 to the cell membrane and its amino acid transporter activity. Interacts with SLC6A19; this interaction regulates the trafficking of SLC6A19 to the cell membrane and its amino acid transporter activity. Interacts with SNAPIN. Post-translationally, glycosylated. Glycosylation is required for plasma membrane localization and for its cleavage by BACE2. In terms of processing, proteolytically processed in pancreatic beta cells by BACE2 leading to the generation and extracellular release of soluble CLTRN, and a corresponding cell-associated C-terminal fragment which is later cleaved by gamma-secretase. This shedding process inactivates CLTRN. Three cleavage sites have been identified for BACE2, two clustered sites after Phe-116 and Leu-118 and a more membrane proximal site at Phe-125; the preferred BACE2 cleavage site seems to be between Phe-125 and Leu-126, Phe-116 and Leu-118 act as alternative sites.

The protein resides in the cell membrane. In terms of biological role, plays an important role in amino acid transport by acting as binding partner of amino acid transporters SLC6A18 and SLC6A19, regulating their trafficking on the cell surface and their activity. May also play a role in trafficking of amino acid transporters SLC3A1 and SLC7A9 to the renal cortical cell membrane. Regulator of SNARE complex function. Stimulator of beta cell replication. The polypeptide is Collectrin (CLTRN) (Bos taurus (Bovine)).